Reading from the N-terminus, the 370-residue chain is Cytochrome b (370 aa).

4 helical membrane passes run 25-45 (FGSM…FLAV), 69-90 (WLMQ…YIHI), 105-125 (WLSG…GYVL), and 170-190 (FFAL…LHVM). Residues H75 and H89 each contribute to the heme b site. The heme b site is built by H174 and H188. A ubiquinone is bound at residue H193. Transmembrane regions (helical) follow at residues 218–238 (YKDL…VSFS), 280–300 (LGGA…PFTH), 312–332 (FMQM…WTAT), and 339–358 (FTLI…ISNP).

Belongs to the cytochrome b family. As to quaternary structure, the cytochrome bc1 complex contains 3 respiratory subunits (MT-CYB, CYC1 and UQCRFS1), 2 core proteins (UQCRC1 and UQCRC2) and probably 6 low-molecular weight proteins. Requires heme b as cofactor.

The protein localises to the mitochondrion inner membrane. Component of the ubiquinol-cytochrome c reductase complex (complex III or cytochrome b-c1 complex) that is part of the mitochondrial respiratory chain. The b-c1 complex mediates electron transfer from ubiquinol to cytochrome c. Contributes to the generation of a proton gradient across the mitochondrial membrane that is then used for ATP synthesis. The polypeptide is Cytochrome b (MT-CYB) (Eunectes notaeus (Yellow anaconda)).